The primary structure comprises 148 residues: Ribosome maturation factor RimP (148 aa).

This sequence belongs to the RimP family.

It is found in the cytoplasm. Functionally, required for maturation of 30S ribosomal subunits. This is Ribosome maturation factor RimP from Thermosipho africanus (strain TCF52B).